We begin with the raw amino-acid sequence, 446 residues long: Glutamine synthetase (446 aa).

One can recognise a GS beta-grasp domain in the interval 18 to 103; that stretch reads ENVRYLRLQF…LICDVYKTDG (86 aa). Positions 110–446 constitute a GS catalytic domain; that stretch reads PRANLKRVLK…WERDQYMKQY (337 aa). Mg(2+) is bound by residues Glu-134 and Glu-136. Residue Glu-186 participates in ATP binding. Residues Glu-191 and Glu-198 each coordinate Mg(2+). L-glutamate is bound by residues 242–243 and Gly-243; that span reads NG. His-247 is a binding site for Mg(2+). Ser-251 contacts ATP. L-glutamate contacts are provided by Arg-300, Glu-306, and Arg-318. Residues Arg-318 and Arg-323 each coordinate ATP. A Mg(2+)-binding site is contributed by Glu-335. An L-glutamate-binding site is contributed by Arg-337.

It belongs to the glutamine synthetase family. As to quaternary structure, oligomer of 12 subunits arranged in the form of two hexagons. In its feedback-inhibited form, interacts with TnrA in order to block its DNA-binding activity. Mg(2+) serves as cofactor.

It localises to the cytoplasm. The enzyme catalyses L-glutamate + NH4(+) + ATP = L-glutamine + ADP + phosphate + H(+). Its activity is regulated as follows. Inhibited by glutamine. Its function is as follows. Glutamine synthetase (GS) is an unusual multitasking protein that functions as an enzyme, a transcription coregulator, and a chaperone in ammonium assimilation and in the regulation of genes involved in nitrogen metabolism. It catalyzes the ATP-dependent biosynthesis of glutamine from glutamate and ammonia. Feedback-inhibited GlnA also interacts with and regulates the activity of the transcriptional regulator TnrA. During nitrogen limitation, TnrA is in its DNA-binding active state and turns on the transcription of genes required for nitrogen assimilation. Under conditions of nitrogen excess, feedback-inhibited GlnA forms a stable complex with TnrA, which inhibits its DNA-binding activity. In contrast, feedback-inhibited GlnA acts as a chaperone to stabilize the DNA-binding activity of GlnR, which represses the transcription of nitrogen assimilation genes. The protein is Glutamine synthetase of Staphylococcus aureus (strain MSSA476).